Consider the following 526-residue polypeptide: 3',5'-cyclic-nucleotide phosphodiesterase 2 (526 aa).

The 345-residue stretch at 182–526 folds into the PDEase domain; the sequence is RNIEFMSFLS…EYWMKHKKPQ (345 aa). His-265 acts as the Proton donor in catalysis. Residues His-269, His-302, Asp-303, and Asp-400 each contribute to the a divalent metal cation site.

This sequence belongs to the cyclic nucleotide phosphodiesterase family. As to quaternary structure, monomer. It depends on a divalent metal cation as a cofactor.

It carries out the reaction 3',5'-cyclic AMP + H2O = AMP + H(+). Its function is as follows. Controls the level of cAMP in yeast cells, together with the low-affinity cAMP phosphodiesterase (PDE1). This Saccharomyces cerevisiae (strain ATCC 204508 / S288c) (Baker's yeast) protein is 3',5'-cyclic-nucleotide phosphodiesterase 2.